A 131-amino-acid chain; its full sequence is Ribosome-binding factor A (131 aa).

Belongs to the RbfA family. As to quaternary structure, monomer. Binds 30S ribosomal subunits, but not 50S ribosomal subunits or 70S ribosomes.

Its subcellular location is the cytoplasm. Its function is as follows. One of several proteins that assist in the late maturation steps of the functional core of the 30S ribosomal subunit. Associates with free 30S ribosomal subunits (but not with 30S subunits that are part of 70S ribosomes or polysomes). Required for efficient processing of 16S rRNA. May interact with the 5'-terminal helix region of 16S rRNA. The polypeptide is Ribosome-binding factor A (Thermotoga maritima (strain ATCC 43589 / DSM 3109 / JCM 10099 / NBRC 100826 / MSB8)).